A 96-amino-acid chain; its full sequence is Co-chaperonin GroES (96 aa).

It belongs to the GroES chaperonin family. In terms of assembly, heptamer of 7 subunits arranged in a ring. Interacts with the chaperonin GroEL.

It localises to the cytoplasm. Together with the chaperonin GroEL, plays an essential role in assisting protein folding. The GroEL-GroES system forms a nano-cage that allows encapsulation of the non-native substrate proteins and provides a physical environment optimized to promote and accelerate protein folding. GroES binds to the apical surface of the GroEL ring, thereby capping the opening of the GroEL channel. The polypeptide is Co-chaperonin GroES (Acinetobacter baumannii (strain AB307-0294)).